A 126-amino-acid chain; its full sequence is MVLGWLPLLVMVLAPGTTGVKDCVFCELTDSTSCPGTSMRCGDDEDCFTGHGVAPGVGPIINKGCVHATSCGHEEPINYMGVTYSLTTNCCTGHMCNGAPDPTRGRLAGAAASLALGVLLLLQHVL.

The first 19 residues, 1–19 (MVLGWLPLLVMVLAPGTTG), serve as a signal peptide directing secretion. Cystine bridges form between Cys23/Cys47, Cys26/Cys34, Cys41/Cys65, Cys71/Cys90, and Cys91/Cys96. The 75-residue stretch at 23 to 97 (CVFCELTDST…TNCCTGHMCN (75 aa)) folds into the UPAR/Ly6 domain. A lipid anchor (GPI-anchor amidated asparagine) is attached at Asn97. A propeptide spans 98-126 (GAPDPTRGRLAGAAASLALGVLLLLQHVL) (removed in mature form).

It belongs to the SPACA4/bouncer family.

The protein localises to the cell membrane. Its subcellular location is the cytoplasmic vesicle. The protein resides in the secretory vesicle. It is found in the acrosome. It localises to the acrosome inner membrane. The protein localises to the acrosome outer membrane. Its function is as follows. Sperm surface membrane protein that is essential for effective sperm-zona pellucida binding and penetration during fertilization. This chain is Sperm acrosome membrane-associated protein 4 (SPACA4), found in Bos taurus (Bovine).